Reading from the N-terminus, the 361-residue chain is MRKWICCTCQIEDSNEEQQLKSSQQQSDANHKNSKPAPVAKHEVKKEALPIEVPPLSLDEVKEKTENFGSKALIGEGSYGRVYYATLNDGVAVALKKLDVAPEAETDTEFLSQVSMVSRLKHENLIQLLGFCVDGNLRVLAYEFATMGSLHDILHGRKGVQGAQPGPTLDWITRVKIAVEAARGLEYLHEKSQPPVIHRDIRSSNVLLFEDYKAKIADFNLSNQAPDNAARLHSTRVLGTFGYHAPEYAMTGQLTQKSDVYSFGVVLLELLTGRKPVDHTMPRGQQSLVTWATPRLSEDKVKQCIDPKLKADYPPKAVAKLAAVAALCVQYEAEFRPNMSIVVKALQPLLKPPAAAPAPES.

Residues 16-43 (EEQQLKSSQQQSDANHKNSKPAPVAKHE) form a disordered region. A Protein kinase domain is found at 68–350 (FGSKALIGEG…IVVKALQPLL (283 aa)). Residues 74–82 (IGEGSYGRV) and K96 contribute to the ATP site. The active-site Proton acceptor is the D200.

The protein belongs to the protein kinase superfamily. Tyr protein kinase family. In terms of assembly, interacts with OXI1. In terms of processing, autophosphorylated and phosphorylated by OXI1.

It is found in the cell membrane. It carries out the reaction L-tyrosyl-[protein] + ATP = O-phospho-L-tyrosyl-[protein] + ADP + H(+). This is PTI1-like tyrosine-protein kinase 1 (PTI11) from Arabidopsis thaliana (Mouse-ear cress).